The primary structure comprises 204 residues: Superoxide dismutase [Mn] (204 aa).

Mn(2+) is bound at residue histidine 27. Residues threonine 34 and threonine 70 each carry the phosphothreonine modification. Histidine 82, aspartate 164, and histidine 168 together coordinate Mn(2+).

It belongs to the iron/manganese superoxide dismutase family. As to quaternary structure, homodimer. The cofactor is Mn(2+).

It carries out the reaction 2 superoxide + 2 H(+) = H2O2 + O2. Functionally, destroys superoxide anion radicals which are normally produced within the cells and which are toxic to biological systems. This chain is Superoxide dismutase [Mn] (sodA), found in Geobacillus stearothermophilus (Bacillus stearothermophilus).